The chain runs to 171 residues: uncharacterized protein (171 aa).

The PfpI endopeptidase domain occupies 3 to 171 (KKVAIILANE…FNREIVKQLQ (169 aa)).

The protein belongs to the peptidase C56 family.

This is an uncharacterized protein from Staphylococcus aureus (strain MRSA252).